Consider the following 422-residue polypeptide: Glyceraldehyde-3-phosphate dehydrogenase GAPCP1, chloroplastic (422 aa).

The N-terminal 69 residues, methionine 1–alanine 69, are a transit peptide targeting the chloroplast. Residues serine 50–serine 63 are compositionally biased toward polar residues. Residues serine 50 to serine 84 form a disordered region. Threonine 70 carries the N-acetylthreonine modification. Residues arginine 96 to isoleucine 97, aspartate 118, and arginine 164 each bind NAD(+). Residues serine 235 to threonine 237, threonine 266, threonine 295 to glycine 296, and arginine 318 contribute to the D-glyceraldehyde 3-phosphate site. Cysteine 236 (nucleophile) is an active-site residue. Residue asparagine 400 participates in NAD(+) binding.

The protein belongs to the glyceraldehyde-3-phosphate dehydrogenase family. As to quaternary structure, homotetramer. Expressed in shoot and root vasculature, leaf veins and vascular tissue of flowers and siliques.

The protein resides in the plastid. It localises to the chloroplast stroma. It carries out the reaction D-glyceraldehyde 3-phosphate + phosphate + NAD(+) = (2R)-3-phospho-glyceroyl phosphate + NADH + H(+). Functionally, involved in plastidial glycolytic pathway and plays a specific role in glycolytic energy production in non-green plastids and chloroplasts. Essential for breakdown of starch to form sucrose for export to non-photosynthetic tissues, and to generate primary metabolites for anabolic pathways such as fatty acid and amino acid synthesis. Plays an important role in plant development by providing substrates for the phosphorylated pathway of serine biosynthesis in roots. Plays a crucial role in pollen development. Functionally redundant with GAPCP2. In Arabidopsis thaliana (Mouse-ear cress), this protein is Glyceraldehyde-3-phosphate dehydrogenase GAPCP1, chloroplastic (GAPCP1).